A 213-amino-acid chain; its full sequence is Chloramphenicol acetyltransferase 2 (213 aa).

The active-site Proton acceptor is H189.

The protein belongs to the chloramphenicol acetyltransferase family. As to quaternary structure, homotrimer.

It catalyses the reaction chloramphenicol + acetyl-CoA = chloramphenicol 3-acetate + CoA. Functionally, this enzyme is an effector of chloramphenicol resistance in bacteria. This is Chloramphenicol acetyltransferase 2 (cat-IIH) from Haemophilus influenzae.